The chain runs to 291 residues: Methionine aminopeptidase (291 aa).

A substrate-binding site is contributed by histidine 118. The a divalent metal cation site is built by aspartate 135, aspartate 146, and histidine 209. Histidine 216 contacts substrate. Positions 241 and 273 each coordinate a divalent metal cation.

The protein belongs to the peptidase M24A family. Methionine aminopeptidase type 1 subfamily. Monomer. It depends on Co(2+) as a cofactor. Requires Zn(2+) as cofactor. Mn(2+) serves as cofactor. The cofactor is Fe(2+).

The enzyme catalyses Release of N-terminal amino acids, preferentially methionine, from peptides and arylamides.. In terms of biological role, removes the N-terminal methionine from nascent proteins. The N-terminal methionine is often cleaved when the second residue in the primary sequence is small and uncharged (Met-Ala-, Cys, Gly, Pro, Ser, Thr, or Val). Requires deformylation of the N(alpha)-formylated initiator methionine before it can be hydrolyzed. The sequence is that of Methionine aminopeptidase from Chlamydia trachomatis serovar D (strain ATCC VR-885 / DSM 19411 / UW-3/Cx).